The primary structure comprises 235 residues: Phosphoribosylaminoimidazole-succinocarboxamide synthase (235 aa).

This sequence belongs to the SAICAR synthetase family.

It catalyses the reaction 5-amino-1-(5-phospho-D-ribosyl)imidazole-4-carboxylate + L-aspartate + ATP = (2S)-2-[5-amino-1-(5-phospho-beta-D-ribosyl)imidazole-4-carboxamido]succinate + ADP + phosphate + 2 H(+). It functions in the pathway purine metabolism; IMP biosynthesis via de novo pathway; 5-amino-1-(5-phospho-D-ribosyl)imidazole-4-carboxamide from 5-amino-1-(5-phospho-D-ribosyl)imidazole-4-carboxylate: step 1/2. The chain is Phosphoribosylaminoimidazole-succinocarboxamide synthase from Streptococcus agalactiae serotype Ia (strain ATCC 27591 / A909 / CDC SS700).